The sequence spans 273 residues: Formamidopyrimidine-DNA glycosylase (273 aa).

The active-site Schiff-base intermediate with DNA is the Pro-2. Catalysis depends on Glu-3, which acts as the Proton donor. Lys-59 (proton donor; for beta-elimination activity) is an active-site residue. DNA contacts are provided by His-92 and Arg-111. The FPG-type zinc-finger motif lies at 239-273 (KVYGKTDEPCVVCGTPIEKIKLNGRGTHFCPNCQK). The Proton donor; for delta-elimination activity role is filled by Arg-263.

This sequence belongs to the FPG family. Monomer. Zn(2+) is required as a cofactor.

The catalysed reaction is Hydrolysis of DNA containing ring-opened 7-methylguanine residues, releasing 2,6-diamino-4-hydroxy-5-(N-methyl)formamidopyrimidine.. The enzyme catalyses 2'-deoxyribonucleotide-(2'-deoxyribose 5'-phosphate)-2'-deoxyribonucleotide-DNA = a 3'-end 2'-deoxyribonucleotide-(2,3-dehydro-2,3-deoxyribose 5'-phosphate)-DNA + a 5'-end 5'-phospho-2'-deoxyribonucleoside-DNA + H(+). Its function is as follows. Involved in base excision repair of DNA damaged by oxidation or by mutagenic agents. Acts as a DNA glycosylase that recognizes and removes damaged bases. Has a preference for oxidized purines, such as 7,8-dihydro-8-oxoguanine (8-oxoG). Has AP (apurinic/apyrimidinic) lyase activity and introduces nicks in the DNA strand. Cleaves the DNA backbone by beta-delta elimination to generate a single-strand break at the site of the removed base with both 3'- and 5'-phosphates. The protein is Formamidopyrimidine-DNA glycosylase of Listeria monocytogenes serovar 1/2a (strain ATCC BAA-679 / EGD-e).